Here is a 532-residue protein sequence, read N- to C-terminus: MSIPHIAPVPHPRDGYYATNNPYQVNGPKGFTEFKYLEETHDLFVRLDFPGIQKESVIILLEPSKKAVIVTGEAPKESKHDSSHRKYGTATGLICDCCEISNIQCFVGDGVVRLILSKQKINLRVPIFCSCKITNLQNVLFFCLIFVGGARMPTDASPNIIRGYNPEDLSVELLLETSLRCFSIVNVSDIFHGFVLLIPIVAVAGGHPLAHLRGLNPEGCRGTDPFDPAFTGPTIRPHPSVLEGSTSAYETKQLSNGGLYLRIDMPGVPSDGFIVAVDGNGVVTIMGRAPATMHDSNGFYAMNNPYQANGPKGFAEFNQERDCGYPLTLLEPSKKAVTVTGDAAKSSKHDASNRNNNIHTFVEDGVVRLILSKKKIYPHAPNFCSFGGATIPTGDAPVADGTPYVNLLAHFRGLIPKGRRCTDPGDPAFTGPVVLPHPSVLEGPMMPYETKQLSNGGLYMRVDMPGVPSEKFMVAVDGDGVVTIMGRAPVTMHDTSGRTYVAKVANVPRGYDGGRIKLVPKHGVIRLTIPSN.

SHSP domains are found at residues 25 to 134 (VNGP…CKIT) and 439 to 532 (SVLE…IPSN).

The protein belongs to the small heat shock protein (HSP20) family.

This is Putative 57 kDa heat shock protein from Arabidopsis thaliana (Mouse-ear cress).